Reading from the N-terminus, the 321-residue chain is Protease HtpX homolog (321 aa).

2 consecutive transmembrane segments (helical) span residues 6 to 26 and 28 to 48; these read TAML…LIGG and GGMM…YWNS. Histidine 130 contributes to the Zn(2+) binding site. Residue glutamate 131 is part of the active site. Residue histidine 134 participates in Zn(2+) binding. The next 2 membrane-spanning stretches (helical) occupy residues 145–165 and 173–193; these read ITAT…FFGG and PLGF…AMLV. A Zn(2+)-binding site is contributed by glutamate 202. A disordered region spans residues 281 to 321; that stretch reads EFSPRASTPPPSGDRPVRKSGSVPTTGWRRGNENERKGPWS. Positions 310–321 are enriched in basic and acidic residues; it reads RGNENERKGPWS.

The protein belongs to the peptidase M48B family. Zn(2+) serves as cofactor.

It localises to the cell inner membrane. The protein is Protease HtpX homolog of Agrobacterium fabrum (strain C58 / ATCC 33970) (Agrobacterium tumefaciens (strain C58)).